The chain runs to 522 residues: tRNA-2-methylthio-N(6)-dimethylallyladenosine synthase (522 aa).

Residues 1–26 (MSLTIPSPASGTSTSATTDTAPAAAP) are compositionally biased toward low complexity. A disordered region spans residues 1–27 (MSLTIPSPASGTSTSATTDTAPAAAPQ). The MTTase N-terminal domain occupies 28-143 (RTYQVRTFGC…LPALLDRARH (116 aa)). C37, C72, C106, C180, C184, and C187 together coordinate [4Fe-4S] cluster. The region spanning 166 to 396 (RDSVYSGWVS…TALQDRIAAE (231 aa)) is the Radical SAM core domain. The TRAM domain occupies 399-469 (ARQLGRRVEV…AFHLVADPAS (71 aa)). The disordered stretch occupies residues 481–522 (GDAWDRSQADSCGAPVAGGGAGSNGGKGGVSLGMPALPVRRS). The segment covering 496 to 511 (VAGGGAGSNGGKGGVS) has biased composition (gly residues).

Belongs to the methylthiotransferase family. MiaB subfamily. As to quaternary structure, monomer. The cofactor is [4Fe-4S] cluster.

Its subcellular location is the cytoplasm. It carries out the reaction N(6)-dimethylallyladenosine(37) in tRNA + (sulfur carrier)-SH + AH2 + 2 S-adenosyl-L-methionine = 2-methylsulfanyl-N(6)-dimethylallyladenosine(37) in tRNA + (sulfur carrier)-H + 5'-deoxyadenosine + L-methionine + A + S-adenosyl-L-homocysteine + 2 H(+). In terms of biological role, catalyzes the methylthiolation of N6-(dimethylallyl)adenosine (i(6)A), leading to the formation of 2-methylthio-N6-(dimethylallyl)adenosine (ms(2)i(6)A) at position 37 in tRNAs that read codons beginning with uridine. In Arthrobacter sp. (strain FB24), this protein is tRNA-2-methylthio-N(6)-dimethylallyladenosine synthase.